The sequence spans 447 residues: Phosphoglucosamine mutase (447 aa).

Ser-102 acts as the Phosphoserine intermediate in catalysis. Ser-102, Asp-241, Asp-243, and Asp-245 together coordinate Mg(2+). At Ser-102 the chain carries Phosphoserine.

Belongs to the phosphohexose mutase family. Mg(2+) serves as cofactor. Activated by phosphorylation.

The catalysed reaction is alpha-D-glucosamine 1-phosphate = D-glucosamine 6-phosphate. Catalyzes the conversion of glucosamine-6-phosphate to glucosamine-1-phosphate. The sequence is that of Phosphoglucosamine mutase from Methylococcus capsulatus (strain ATCC 33009 / NCIMB 11132 / Bath).